Reading from the N-terminus, the 438-residue chain is Diaminopimelate decarboxylase (438 aa).

Lys73 bears the N6-(pyridoxal phosphate)lysine mark. Pyridoxal 5'-phosphate contacts are provided by residues Ser217, Gly254, and 294 to 297 (EPGR). Substrate contacts are provided by Arg297, Arg333, and Tyr337. Cys362 serves as the catalytic Proton donor. Glu363 and Tyr391 together coordinate substrate. Tyr391 lines the pyridoxal 5'-phosphate pocket.

The protein belongs to the Orn/Lys/Arg decarboxylase class-II family. LysA subfamily. In terms of assembly, homodimer. The cofactor is pyridoxal 5'-phosphate.

It carries out the reaction meso-2,6-diaminopimelate + H(+) = L-lysine + CO2. Its pathway is amino-acid biosynthesis; L-lysine biosynthesis via DAP pathway; L-lysine from DL-2,6-diaminopimelate: step 1/1. With respect to regulation, competitively inhibited by the substrate analog azelaic acid in vitro but not in vivo. Its function is as follows. Specifically catalyzes the decarboxylation of meso-diaminopimelate (meso-DAP) to L-lysine. This chain is Diaminopimelate decarboxylase, found in Methanocaldococcus jannaschii (strain ATCC 43067 / DSM 2661 / JAL-1 / JCM 10045 / NBRC 100440) (Methanococcus jannaschii).